Consider the following 326-residue polypeptide: 3-isopropylmalate dehydrogenase (326 aa).

Arg-81, Arg-91, Arg-112, and Asp-198 together coordinate substrate. Positions 198, 222, and 226 each coordinate Mg(2+). Residue 255–267 (GAAFDIAGKGIAN) participates in NAD(+) binding.

Belongs to the isocitrate and isopropylmalate dehydrogenases family. Homotetramer. Mg(2+) is required as a cofactor. The cofactor is Mn(2+).

It is found in the cytoplasm. The catalysed reaction is (2R,3S)-3-isopropylmalate + NAD(+) = 4-methyl-2-oxopentanoate + CO2 + NADH. It participates in amino-acid biosynthesis; L-leucine biosynthesis; L-leucine from 3-methyl-2-oxobutanoate: step 3/4. Functionally, catalyzes the oxidation of 3-carboxy-2-hydroxy-4-methylpentanoate (3-isopropylmalate) to 3-carboxy-4-methyl-2-oxopentanoate. The product decarboxylates to 4-methyl-2 oxopentanoate. This Archaeoglobus fulgidus (strain ATCC 49558 / DSM 4304 / JCM 9628 / NBRC 100126 / VC-16) protein is 3-isopropylmalate dehydrogenase (leuB).